The sequence spans 313 residues: Porphobilinogen deaminase (313 aa).

S-(dipyrrolylmethanemethyl)cysteine is present on cysteine 242.

This sequence belongs to the HMBS family. Monomer. It depends on dipyrromethane as a cofactor.

The catalysed reaction is 4 porphobilinogen + H2O = hydroxymethylbilane + 4 NH4(+). The protein operates within porphyrin-containing compound metabolism; protoporphyrin-IX biosynthesis; coproporphyrinogen-III from 5-aminolevulinate: step 2/4. Its function is as follows. Tetrapolymerization of the monopyrrole PBG into the hydroxymethylbilane pre-uroporphyrinogen in several discrete steps. This Pseudomonas putida (strain GB-1) protein is Porphobilinogen deaminase.